Consider the following 146-residue polypeptide: 3-dehydroquinate dehydratase (146 aa).

Tyrosine 23 functions as the Proton acceptor in the catalytic mechanism. Substrate contacts are provided by asparagine 74, histidine 80, and aspartate 87. Catalysis depends on histidine 100, which acts as the Proton donor. Residues 101-102 (IS) and arginine 111 each bind substrate.

Belongs to the type-II 3-dehydroquinase family. In terms of assembly, homododecamer.

It catalyses the reaction 3-dehydroquinate = 3-dehydroshikimate + H2O. It participates in metabolic intermediate biosynthesis; chorismate biosynthesis; chorismate from D-erythrose 4-phosphate and phosphoenolpyruvate: step 3/7. Its function is as follows. Catalyzes a trans-dehydration via an enolate intermediate. This is 3-dehydroquinate dehydratase from Bacillus cereus (strain B4264).